Consider the following 336-residue polypeptide: Vacuolar protein sorting-associated protein 26B (336 aa).

Phosphoserine occurs at positions 302, 304, and 319.

The protein belongs to the VPS26 family. As to quaternary structure, component of the heterotrimeric retromer cargo-selective complex (CSC), also described as vacuolar protein sorting subcomplex (VPS), formed by VPS26 (VPS26A or VPS26B), VPS29 and VPS35. The CSC has a highly elongated structure with VPS26 and VPS29 binding independently at opposite distal ends of VPS35 as central platform. The CSC is believed to associate with variable sorting nexins to form functionally distinct retromer complex variants. The originally described SNX-BAR retromer is a pentamer containing the CSC and a heterodimeric membrane-deforming subcomplex formed between SNX1 or SNX2 and SNX5 or SNX6 (also called SNX-BAR subcomplex); the respective CSC and SNX-BAR subcomplexes associate with low affinity. The CSC associates with SNX3 to form a SNX3-retromer complex. The CSC associates with SNX27, the WASH complex and the SNX-BAR subcomplex to form the SNX27-retromer complex. Interacts with VPS29, VPS35, TBC1D5, GOLPH3, SNX27.

It is found in the cytoplasm. It localises to the membrane. The protein localises to the early endosome. The protein resides in the late endosome. In terms of biological role, acts as a component of the retromer cargo-selective complex (CSC). The CSC is believed to be the core functional component of retromer or respective retromer complex variants acting to prevent missorting of selected transmembrane cargo proteins into the lysosomal degradation pathway. The recruitment of the CSC to the endosomal membrane involves RAB7A and SNX3. The SNX-BAR retromer mediates retrograde transport of cargo proteins from endosomes to the trans-Golgi network (TGN) and is involved in endosome-to-plasma membrane transport for cargo protein recycling. The SNX3-retromer mediates the retrograde transport of WLS distinct from the SNX-BAR retromer pathway. The SNX27-retromer is believed to be involved in endosome-to-plasma membrane trafficking and recycling of a broad spectrum of cargo proteins. The CSC seems to act as recruitment hub for other proteins, such as the WASH complex and TBC1D5. May be involved in retrograde transport of SORT1 but not of IGF2R. Acts redundantly with VSP26A in SNX-27 mediated endocytic recycling of SLC2A1/GLUT1. The polypeptide is Vacuolar protein sorting-associated protein 26B (VPS26B) (Pongo abelii (Sumatran orangutan)).